We begin with the raw amino-acid sequence, 162 residues long: uncharacterized protein (162 aa).

Belongs to the LOR family.

This is an uncharacterized protein from Bacillus subtilis (strain 168).